The chain runs to 564 residues: Dihydroxy-acid dehydratase (564 aa).

Asp-78 is a binding site for Mg(2+). Cys-119 lines the [2Fe-2S] cluster pocket. Asp-120 and Lys-121 together coordinate Mg(2+). At Lys-121 the chain carries N6-carboxylysine. Position 192 (Cys-192) interacts with [2Fe-2S] cluster. Residue Glu-451 participates in Mg(2+) binding. Ser-477 (proton acceptor) is an active-site residue.

Belongs to the IlvD/Edd family. In terms of assembly, homodimer. The cofactor is [2Fe-2S] cluster. Mg(2+) is required as a cofactor.

The enzyme catalyses (2R)-2,3-dihydroxy-3-methylbutanoate = 3-methyl-2-oxobutanoate + H2O. It carries out the reaction (2R,3R)-2,3-dihydroxy-3-methylpentanoate = (S)-3-methyl-2-oxopentanoate + H2O. The protein operates within amino-acid biosynthesis; L-isoleucine biosynthesis; L-isoleucine from 2-oxobutanoate: step 3/4. Its pathway is amino-acid biosynthesis; L-valine biosynthesis; L-valine from pyruvate: step 3/4. Its function is as follows. Functions in the biosynthesis of branched-chain amino acids. Catalyzes the dehydration of (2R,3R)-2,3-dihydroxy-3-methylpentanoate (2,3-dihydroxy-3-methylvalerate) into 2-oxo-3-methylpentanoate (2-oxo-3-methylvalerate) and of (2R)-2,3-dihydroxy-3-methylbutanoate (2,3-dihydroxyisovalerate) into 2-oxo-3-methylbutanoate (2-oxoisovalerate), the penultimate precursor to L-isoleucine and L-valine, respectively. This chain is Dihydroxy-acid dehydratase, found in Nitratiruptor sp. (strain SB155-2).